The sequence spans 110 residues: Small ribosomal subunit protein bS16 (110 aa).

Residues 81 to 104 (VRPAEVLGKQKQEKERSAKKKDAA) show a composition bias toward basic and acidic residues. Positions 81–110 (VRPAEVLGKQKQEKERSAKKKDAAASETSE) are disordered.

This sequence belongs to the bacterial ribosomal protein bS16 family.

The protein is Small ribosomal subunit protein bS16 of Prochlorococcus marinus (strain NATL2A).